We begin with the raw amino-acid sequence, 124 residues long: Small ribosomal subunit protein uS12 (124 aa).

D89 is subject to 3-methylthioaspartic acid.

It belongs to the universal ribosomal protein uS12 family. In terms of assembly, part of the 30S ribosomal subunit. Contacts proteins S8 and S17. May interact with IF1 in the 30S initiation complex.

Its function is as follows. With S4 and S5 plays an important role in translational accuracy. Interacts with and stabilizes bases of the 16S rRNA that are involved in tRNA selection in the A site and with the mRNA backbone. Located at the interface of the 30S and 50S subunits, it traverses the body of the 30S subunit contacting proteins on the other side and probably holding the rRNA structure together. The combined cluster of proteins S8, S12 and S17 appears to hold together the shoulder and platform of the 30S subunit. This is Small ribosomal subunit protein uS12 from Blochmanniella pennsylvanica (strain BPEN).